Consider the following 306-residue polypeptide: Ribosomal protein L11 methyltransferase (306 aa).

4 residues coordinate S-adenosyl-L-methionine: Thr152, Gly179, Asp201, and Asn243.

The protein belongs to the methyltransferase superfamily. PrmA family.

It localises to the cytoplasm. It catalyses the reaction L-lysyl-[protein] + 3 S-adenosyl-L-methionine = N(6),N(6),N(6)-trimethyl-L-lysyl-[protein] + 3 S-adenosyl-L-homocysteine + 3 H(+). In terms of biological role, methylates ribosomal protein L11. This Citrifermentans bemidjiense (strain ATCC BAA-1014 / DSM 16622 / JCM 12645 / Bem) (Geobacter bemidjiensis) protein is Ribosomal protein L11 methyltransferase.